Reading from the N-terminus, the 215-residue chain is MSVKNFMNNKKGDSGIGTLIVFIAMVLVAAVAASVLINTSGFLQQKAATTGKESTEQVASGLQVMGVNGYQDGTNDANVSKMAIYVTPNAGSSAIDLTNSKLFVTYDGQTHVLAYDDVTDLTTGNSDIFDAINVGTPASEFHVAVLQDNDNSTGNGVINKGDIVAIVIETSDIFGNDGIPERKSVSGKVQPEFGAPGVFEFTTPATYTNKVLELQ.

Positions 1 to 12 are excised as a propeptide; the sequence is MSVKNFMNNKKG.

Belongs to the archaeal flagellin family.

The protein resides in the archaeal flagellum. Its function is as follows. Flagellin is the subunit protein which polymerizes to form the filaments of archaeal flagella. The protein is Flagellin B1 (flaB1) of Methanococcus vannielii (strain ATCC 35089 / DSM 1224 / JCM 13029 / OCM 148 / SB).